The sequence spans 261 residues: uncharacterized protein (261 aa).

6 residues coordinate a divalent metal cation: Asp43, His45, Asp75, Asn106, His197, and His199.

Belongs to the metallophosphoesterase superfamily. A divalent metal cation is required as a cofactor.

This is an uncharacterized protein from Aquifex aeolicus (strain VF5).